The primary structure comprises 161 residues: Thy-1 membrane glycoprotein (161 aa).

An N-terminal signal peptide occupies residues 1–19; sequence MNPVISITLLLSVLQMSRG. Gln-20 carries the pyrrolidone carboxylic acid modification. One can recognise an Ig-like V-type domain in the interval 20–126; sequence QRVISLTACL…NKTINVIRDK (107 aa). 2 disulfides stabilise this stretch: Cys-28–Cys-130 and Cys-38–Cys-104. An N-linked (GlcNAc...) (complex) asparagine; alternate glycan is attached at Asn-42. N-linked (GlcNAc...) (high mannose) asparagine; alternate glycosylation occurs at Asn-42. Residue Asn-42 is glycosylated (N-linked (GlcNAc...) asparagine; alternate). A Phosphoserine modification is found at Ser-82. A glycan (N-linked (GlcNAc...) (complex) asparagine; alternate) is linked at Asn-93. Residue Asn-93 is glycosylated (N-linked (GlcNAc...) asparagine; alternate). Residue Asn-117 is glycosylated (N-linked (GlcNAc...) (high mannose) asparagine; in brain; alternate). Residue Asn-117 is glycosylated (N-linked (GlcNAc...) (hybrid) asparagine; in brain; alternate). The GPI-anchor amidated cysteine moiety is linked to residue Cys-130. Residues 131 to 161 constitute a propeptide, removed in mature form; it reads GGISLLVQNTSWLLLLLLSLSFLQATDFISL.

In terms of processing, glycosylation is tissue specific. Sialylation of N-glycans at Asn-93 in brain and at Asn-42, Asn-93 and Asn-117 in thymus. As to expression, abundant in lymphoid tissues.

The protein localises to the cell membrane. May play a role in cell-cell or cell-ligand interactions during synaptogenesis and other events in the brain. The chain is Thy-1 membrane glycoprotein (Thy1) from Rattus norvegicus (Rat).